Here is a 291-residue protein sequence, read N- to C-terminus: Bifunctional protein FolD (291 aa).

NADP(+) is bound by residues 166-168 (GAS) and Ile232.

The protein belongs to the tetrahydrofolate dehydrogenase/cyclohydrolase family. In terms of assembly, homodimer.

It catalyses the reaction (6R)-5,10-methylene-5,6,7,8-tetrahydrofolate + NADP(+) = (6R)-5,10-methenyltetrahydrofolate + NADPH. The catalysed reaction is (6R)-5,10-methenyltetrahydrofolate + H2O = (6R)-10-formyltetrahydrofolate + H(+). It participates in one-carbon metabolism; tetrahydrofolate interconversion. Functionally, catalyzes the oxidation of 5,10-methylenetetrahydrofolate to 5,10-methenyltetrahydrofolate and then the hydrolysis of 5,10-methenyltetrahydrofolate to 10-formyltetrahydrofolate. This chain is Bifunctional protein FolD, found in Photorhabdus laumondii subsp. laumondii (strain DSM 15139 / CIP 105565 / TT01) (Photorhabdus luminescens subsp. laumondii).